Consider the following 242-residue polypeptide: Haloacid dehalogenase-like hydrolase domain-containing protein 3 (242 aa).

This sequence belongs to the HAD-like hydrolase superfamily.

This chain is Haloacid dehalogenase-like hydrolase domain-containing protein 3 (hdhd3), found in Danio rerio (Zebrafish).